The primary structure comprises 473 residues: Cysteine--tRNA ligase (473 aa).

Cys-30 is a binding site for Zn(2+). The short motif at 32-42 (MTVYDYCHIGH) is the 'HIGH' region element. Zn(2+) is bound by residues Cys-213, His-238, and Glu-242. Positions 270 to 274 (KMSKS) match the 'KMSKS' region motif. Lys-273 serves as a coordination point for ATP.

It belongs to the class-I aminoacyl-tRNA synthetase family. In terms of assembly, monomer. The cofactor is Zn(2+).

It localises to the cytoplasm. The enzyme catalyses tRNA(Cys) + L-cysteine + ATP = L-cysteinyl-tRNA(Cys) + AMP + diphosphate. This chain is Cysteine--tRNA ligase, found in Acinetobacter baylyi (strain ATCC 33305 / BD413 / ADP1).